The sequence spans 174 residues: NADH-ubiquinone oxidoreductase chain 6 (174 aa).

Helical transmembrane passes span 24–44 (LALGLTLLIQTIFVCLLSGLM), 53–73 (ILFLIFLGGMLVLFIYVTSLA), 82–102 (IKLTLFSMFILFFMFILSMIL), and 143–163 (FVTILLMNYLLITLIVVVKIT).

This sequence belongs to the complex I subunit 6 family.

It localises to the mitochondrion membrane. The catalysed reaction is a ubiquinone + NADH + 5 H(+)(in) = a ubiquinol + NAD(+) + 4 H(+)(out). Core subunit of the mitochondrial membrane respiratory chain NADH dehydrogenase (Complex I) that is believed to belong to the minimal assembly required for catalysis. Complex I functions in the transfer of electrons from NADH to the respiratory chain. The immediate electron acceptor for the enzyme is believed to be ubiquinone. The protein is NADH-ubiquinone oxidoreductase chain 6 (mt:ND6) of Drosophila yakuba (Fruit fly).